The primary structure comprises 374 residues: tRNA-specific 2-thiouridylase MnmA (374 aa).

ATP is bound by residues 15–22 (GMSGGVDS) and M41. Residues 101-103 (NPD) are interaction with target base in tRNA. The Nucleophile role is filled by C106. C106 and C206 are disulfide-bonded. G130 is an ATP binding site. The interaction with tRNA stretch occupies residues 156–158 (KDQ). C206 functions as the Cysteine persulfide intermediate in the catalytic mechanism. An interaction with tRNA region spans residues 324 to 325 (RY).

This sequence belongs to the MnmA/TRMU family.

The protein resides in the cytoplasm. It catalyses the reaction S-sulfanyl-L-cysteinyl-[protein] + uridine(34) in tRNA + AH2 + ATP = 2-thiouridine(34) in tRNA + L-cysteinyl-[protein] + A + AMP + diphosphate + H(+). In terms of biological role, catalyzes the 2-thiolation of uridine at the wobble position (U34) of tRNA, leading to the formation of s(2)U34. The chain is tRNA-specific 2-thiouridylase MnmA from Aromatoleum aromaticum (strain DSM 19018 / LMG 30748 / EbN1) (Azoarcus sp. (strain EbN1)).